We begin with the raw amino-acid sequence, 352 residues long: Holliday junction branch migration complex subunit RuvB (352 aa).

The interval 5-191 (TDDFSEQRII…FGIVARLEFY (187 aa)) is large ATPase domain (RuvB-L). ATP-binding positions include L30, R31, G72, K75, T76, T77, 138 to 140 (EDY), R181, Y191, and R228. T76 serves as a coordination point for Mg(2+). Residues 192 to 262 (TPLELTKIVT…MADAALVMLD (71 aa)) are small ATPAse domain (RuvB-S). Residues 265 to 352 (PVGFDLMDRK…GPNGDLWAGQ (88 aa)) are head domain (RuvB-H). DNA-binding residues include R301, R320, and R325.

This sequence belongs to the RuvB family. As to quaternary structure, homohexamer. Forms an RuvA(8)-RuvB(12)-Holliday junction (HJ) complex. HJ DNA is sandwiched between 2 RuvA tetramers; dsDNA enters through RuvA and exits via RuvB. An RuvB hexamer assembles on each DNA strand where it exits the tetramer. Each RuvB hexamer is contacted by two RuvA subunits (via domain III) on 2 adjacent RuvB subunits; this complex drives branch migration. In the full resolvosome a probable DNA-RuvA(4)-RuvB(12)-RuvC(2) complex forms which resolves the HJ.

The protein localises to the cytoplasm. The enzyme catalyses ATP + H2O = ADP + phosphate + H(+). The RuvA-RuvB-RuvC complex processes Holliday junction (HJ) DNA during genetic recombination and DNA repair, while the RuvA-RuvB complex plays an important role in the rescue of blocked DNA replication forks via replication fork reversal (RFR). RuvA specifically binds to HJ cruciform DNA, conferring on it an open structure. The RuvB hexamer acts as an ATP-dependent pump, pulling dsDNA into and through the RuvAB complex. RuvB forms 2 homohexamers on either side of HJ DNA bound by 1 or 2 RuvA tetramers; 4 subunits per hexamer contact DNA at a time. Coordinated motions by a converter formed by DNA-disengaged RuvB subunits stimulates ATP hydrolysis and nucleotide exchange. Immobilization of the converter enables RuvB to convert the ATP-contained energy into a lever motion, pulling 2 nucleotides of DNA out of the RuvA tetramer per ATP hydrolyzed, thus driving DNA branch migration. The RuvB motors rotate together with the DNA substrate, which together with the progressing nucleotide cycle form the mechanistic basis for DNA recombination by continuous HJ branch migration. Branch migration allows RuvC to scan DNA until it finds its consensus sequence, where it cleaves and resolves cruciform DNA. The sequence is that of Holliday junction branch migration complex subunit RuvB from Janthinobacterium sp. (strain Marseille) (Minibacterium massiliensis).